The chain runs to 611 residues: DNA mismatch repair protein MutL (611 aa).

The segment at 364-384 (NVNSKPSKYRPATSPTVPKYT) is disordered.

It belongs to the DNA mismatch repair MutL/HexB family.

Its function is as follows. This protein is involved in the repair of mismatches in DNA. It is required for dam-dependent methyl-directed DNA mismatch repair. May act as a 'molecular matchmaker', a protein that promotes the formation of a stable complex between two or more DNA-binding proteins in an ATP-dependent manner without itself being part of a final effector complex. This chain is DNA mismatch repair protein MutL, found in Rickettsia bellii (strain OSU 85-389).